The following is a 193-amino-acid chain: Protein PATRONUS 1 (193 aa).

The DEN-box motif lies at 14–16 (DEN). The D-box motif lies at 46–49 (RKAL).

Interacts directly with the anaphase promoting complex/cyclosome (APC/C) through the CDC27B and CDC20-1 subunits. In terms of tissue distribution, expressed in somatic and reproductive tissues. Expressed in inflorescence, young buds, roots and basal portion of young leaves. Expressed in proliferating cells such as apical meristems of roots and shoots, expanding cotyledons and leaves, root vascular tissues, and in stomatal precursor cells.

The protein localises to the nucleus. The protein resides in the cytoplasm. Required for the maintenance of centromeric cohesion during interkinesis, until meiosis II. Required for regular configuration and segregation of sister chromatids in meiosis II. Also required for centromere cohesion during meiosis I. Involved in spindle organization at the end of telophase I and in meiosis II. Required to prevent precocious release of pericentromeric cohesins during meiosis, but not for cohesion establishment and monopolar orientation of kinetochores at meiosis I. Involved also in somatic development. Regulates mitotic cell division and ploidy stability in somatic cell types. May be involved in the organization of microtubules dynamics. Involved in abiotic stresses and mono- or divalent ions tolerance and may play a role in maintaining meristematic activity under saline conditions. PANS1 and GIG1 are part of a network linking centromere cohesion and cell cycle progression through control of APC/C activity. Regulates the number of dividing cells in root meristem and is necessary for the anaphase onset control through an APC/C-mediated pathway. Involved in maintaining correct chromosome arm cohesion under stress conditions. The chain is Protein PATRONUS 1 from Arabidopsis thaliana (Mouse-ear cress).